A 211-amino-acid chain; its full sequence is N,O-diacetylmuramidase (211 aa).

Residues Asp6 and Glu100 contribute to the active site. A disulfide bridge links Cys108 with Cys147.

The protein belongs to the glycosyl hydrolase 25 family.

It is found in the secreted. It localises to the extracellular space. The catalysed reaction is Hydrolysis of (1-&gt;4)-beta-linkages between N-acetylmuramic acid and N-acetyl-D-glucosamine residues in a peptidoglycan and between N-acetyl-D-glucosamine residues in chitodextrins.. Its function is as follows. This enzyme has both lysozyme (acetylmuramidase) and diacetylmuramidase activities. This Chalaropsis sp protein is N,O-diacetylmuramidase.